The chain runs to 269 residues: Sushi domain-containing protein 3 (269 aa).

The interval 1-23 (MRRTSATLRGRARPRWRAGNTTP) is disordered. The Extracellular portion of the chain corresponds to 1–103 (MRRTSATLRG…VPPHETFGFK (103 aa)). The Sushi domain maps to 30–93 (GTCAQLHPPP…WSSGSPVCKA (64 aa)). 2 cysteine pairs are disulfide-bonded: C32/C75 and C61/C91. Residues 104 to 124 (VAVIASIVSCAIILLMSMAFL) traverse the membrane as a helical segment. Topologically, residues 125–269 (TCCLLKCVQK…PGRPKVYLPG (145 aa)) are cytoplasmic. The interval 171–237 (NNSSSVGGGN…RMGTPGPGGC (67 aa)) is disordered. The span at 176–190 (VGGGNGGPSGGGGKP) shows a compositional bias: gly residues.

It localises to the cell membrane. In Mus musculus (Mouse), this protein is Sushi domain-containing protein 3 (Susd3).